A 287-amino-acid polypeptide reads, in one-letter code: Nucleotide-binding protein Ajs_0902 (287 aa).

An ATP-binding site is contributed by 10 to 17 (GMSGSGKS). 59-62 (DVRS) is a GTP binding site.

It belongs to the RapZ-like family.

Functionally, displays ATPase and GTPase activities. In Acidovorax sp. (strain JS42), this protein is Nucleotide-binding protein Ajs_0902.